Here is a 477-residue protein sequence, read N- to C-terminus: UDP-N-acetylmuramate--L-alanine ligase (477 aa).

Residue 122–128 (GTHGKTT) coordinates ATP.

It belongs to the MurCDEF family.

Its subcellular location is the cytoplasm. The catalysed reaction is UDP-N-acetyl-alpha-D-muramate + L-alanine + ATP = UDP-N-acetyl-alpha-D-muramoyl-L-alanine + ADP + phosphate + H(+). It functions in the pathway cell wall biogenesis; peptidoglycan biosynthesis. In terms of biological role, cell wall formation. The protein is UDP-N-acetylmuramate--L-alanine ligase of Xylella fastidiosa (strain 9a5c).